The primary structure comprises 634 residues: Probable potassium transport system protein Kup 2 (634 aa).

12 helical membrane passes run phenylalanine 20–leucine 40, valine 64–isoleucine 84, phenylalanine 110–isoleucine 130, proline 148–valine 168, alanine 174–alanine 194, alanine 224–alanine 244, tryptophan 258–leucine 278, leucine 290–isoleucine 310, isoleucine 348–phenylalanine 368, alanine 377–methionine 397, alanine 405–alanine 425, and isoleucine 430–threonine 450.

This sequence belongs to the HAK/KUP transporter (TC 2.A.72) family.

The protein localises to the cell inner membrane. It carries out the reaction K(+)(in) + H(+)(in) = K(+)(out) + H(+)(out). Its function is as follows. Transport of potassium into the cell. Likely operates as a K(+):H(+) symporter. This is Probable potassium transport system protein Kup 2 from Rhodopseudomonas palustris (strain ATCC BAA-98 / CGA009).